The chain runs to 346 residues: Uroporphyrinogen decarboxylase (346 aa).

Residues 23–27, aspartate 72, tyrosine 155, serine 209, and histidine 322 contribute to the substrate site; that span reads RQAGR.

The protein belongs to the uroporphyrinogen decarboxylase family. In terms of assembly, homodimer.

The protein resides in the cytoplasm. It carries out the reaction uroporphyrinogen III + 4 H(+) = coproporphyrinogen III + 4 CO2. It functions in the pathway porphyrin-containing compound metabolism; protoporphyrin-IX biosynthesis; coproporphyrinogen-III from 5-aminolevulinate: step 4/4. Functionally, catalyzes the decarboxylation of four acetate groups of uroporphyrinogen-III to yield coproporphyrinogen-III. This is Uroporphyrinogen decarboxylase from Anaeromyxobacter sp. (strain Fw109-5).